A 473-amino-acid chain; its full sequence is Glutamate--tRNA ligase 1 (473 aa).

The 'HIGH' region motif lies at 11–21 (PSPTGYLHIGG). The segment covering 113 to 133 (KARAEGRPPRYDGRWRDRDPS) has biased composition (basic and acidic residues). Residues 113–136 (KARAEGRPPRYDGRWRDRDPSEAP) are disordered. The 'KMSKS' region signature appears at 240 to 244 (KLSKR). Residue K243 participates in ATP binding.

This sequence belongs to the class-I aminoacyl-tRNA synthetase family. Glutamate--tRNA ligase type 1 subfamily. As to quaternary structure, monomer.

The protein localises to the cytoplasm. It carries out the reaction tRNA(Glu) + L-glutamate + ATP = L-glutamyl-tRNA(Glu) + AMP + diphosphate. In terms of biological role, catalyzes the attachment of glutamate to tRNA(Glu) in a two-step reaction: glutamate is first activated by ATP to form Glu-AMP and then transferred to the acceptor end of tRNA(Glu). The polypeptide is Glutamate--tRNA ligase 1 (Brucella melitensis biotype 1 (strain ATCC 23456 / CCUG 17765 / NCTC 10094 / 16M)).